A 355-amino-acid polypeptide reads, in one-letter code: Sesquiterpene synthase-like protein Agr11 (355 aa).

The protein belongs to the terpene synthase family.

In Cyclocybe aegerita (Black poplar mushroom), this protein is Sesquiterpene synthase-like protein Agr11.